A 146-amino-acid polypeptide reads, in one-letter code: Calmodulin-like protein 5 (146 aa).

Ala-2 is modified (N-acetylalanine). EF-hand domains are found at residues 8–43 (EEEAQYKKAFSAVDTDGNGTINAQELGAALKATGKN), 44–74 (LSEAQLRKLISEVDSDGDGEISFQEFLTAAK), 78–113 (AGLEDLQVAFRAFDQDGDGHITVDELRRAMAGLGQP), and 114–146 (LPQEELDAMIREADVDQDGRVNYEEFARMLAQE). Ca(2+) is bound by residues Asp-21, Asp-23, Asn-25, Thr-27, Glu-32, Asp-57, Asp-59, Asp-61, Glu-63, Glu-68, Asp-91, Asp-93, Asp-95, His-97, Glu-102, Asp-127, Asp-129, Asp-131, Arg-133, and Glu-138.

As to quaternary structure, associates with transglutaminase 3. Particularly abundant in the epidermis where its expression is directly related to keratinocyte differentiation. Very low expression in lung.

Its function is as follows. Binds calcium. May be involved in terminal differentiation of keratinocytes. This chain is Calmodulin-like protein 5 (CALML5), found in Homo sapiens (Human).